We begin with the raw amino-acid sequence, 428 residues long: Enolase (428 aa).

Gln163 is a binding site for (2R)-2-phosphoglycerate. Glu205 functions as the Proton donor in the catalytic mechanism. Positions 242, 285, and 312 each coordinate Mg(2+). (2R)-2-phosphoglycerate is bound by residues Lys337, Arg366, Ser367, and Lys388. Lys337 functions as the Proton acceptor in the catalytic mechanism.

It belongs to the enolase family. Requires Mg(2+) as cofactor.

Its subcellular location is the cytoplasm. The protein localises to the secreted. The protein resides in the cell surface. It carries out the reaction (2R)-2-phosphoglycerate = phosphoenolpyruvate + H2O. It participates in carbohydrate degradation; glycolysis; pyruvate from D-glyceraldehyde 3-phosphate: step 4/5. Its function is as follows. Catalyzes the reversible conversion of 2-phosphoglycerate (2-PG) into phosphoenolpyruvate (PEP). It is essential for the degradation of carbohydrates via glycolysis. The protein is Enolase of Brevibacillus brevis (strain 47 / JCM 6285 / NBRC 100599).